A 295-amino-acid chain; its full sequence is Lipoyl synthase (295 aa).

[4Fe-4S] cluster is bound by residues C34, C39, C45, C60, C64, C67, and S273. The region spanning 46 to 262 (WNKRHATIMI…KLMAYAKGFS (217 aa)) is the Radical SAM core domain.

It belongs to the radical SAM superfamily. Lipoyl synthase family. It depends on [4Fe-4S] cluster as a cofactor.

It localises to the cytoplasm. The enzyme catalyses [[Fe-S] cluster scaffold protein carrying a second [4Fe-4S](2+) cluster] + N(6)-octanoyl-L-lysyl-[protein] + 2 oxidized [2Fe-2S]-[ferredoxin] + 2 S-adenosyl-L-methionine + 4 H(+) = [[Fe-S] cluster scaffold protein] + N(6)-[(R)-dihydrolipoyl]-L-lysyl-[protein] + 4 Fe(3+) + 2 hydrogen sulfide + 2 5'-deoxyadenosine + 2 L-methionine + 2 reduced [2Fe-2S]-[ferredoxin]. Its pathway is protein modification; protein lipoylation via endogenous pathway; protein N(6)-(lipoyl)lysine from octanoyl-[acyl-carrier-protein]: step 2/2. In terms of biological role, catalyzes the radical-mediated insertion of two sulfur atoms into the C-6 and C-8 positions of the octanoyl moiety bound to the lipoyl domains of lipoate-dependent enzymes, thereby converting the octanoylated domains into lipoylated derivatives. In Anaplasma marginale (strain St. Maries), this protein is Lipoyl synthase.